A 55-amino-acid polypeptide reads, in one-letter code: Large ribosomal subunit protein bL33 (55 aa).

The protein belongs to the bacterial ribosomal protein bL33 family.

The chain is Large ribosomal subunit protein bL33 from Rhodopseudomonas palustris (strain BisA53).